The chain runs to 208 residues: Small ribosomal subunit protein uS4 (208 aa).

An S4 RNA-binding domain is found at 98 to 161 (RRLDNVIYRL…RKIPVIAEAQ (64 aa)).

The protein belongs to the universal ribosomal protein uS4 family. In terms of assembly, part of the 30S ribosomal subunit. Contacts protein S5. The interaction surface between S4 and S5 is involved in control of translational fidelity.

Its function is as follows. One of the primary rRNA binding proteins, it binds directly to 16S rRNA where it nucleates assembly of the body of the 30S subunit. Functionally, with S5 and S12 plays an important role in translational accuracy. This Nitratidesulfovibrio vulgaris (strain DSM 19637 / Miyazaki F) (Desulfovibrio vulgaris) protein is Small ribosomal subunit protein uS4.